A 118-amino-acid polypeptide reads, in one-letter code: Basic phospholipase A2 PA-15 (118 aa).

Cystine bridges form between C11-C71, C27-C117, C29-C45, C44-C98, C51-C91, C60-C84, and C78-C89. Y28, G30, and G32 together coordinate Ca(2+). H48 is an active-site residue. Ca(2+) is bound at residue D49. D92 is a catalytic residue.

The protein belongs to the phospholipase A2 family. Group I subfamily. D49 sub-subfamily. It depends on Ca(2+) as a cofactor. In terms of tissue distribution, expressed by the venom gland.

The protein resides in the secreted. The catalysed reaction is a 1,2-diacyl-sn-glycero-3-phosphocholine + H2O = a 1-acyl-sn-glycero-3-phosphocholine + a fatty acid + H(+). Functionally, PLA2 catalyzes the calcium-dependent hydrolysis of the 2-acyl groups in 3-sn-phosphoglycerides. This chain is Basic phospholipase A2 PA-15, found in Pseudechis australis (Mulga snake).